A 127-amino-acid polypeptide reads, in one-letter code: Large ribosomal subunit protein bL17 (127 aa).

The protein belongs to the bacterial ribosomal protein bL17 family. In terms of assembly, part of the 50S ribosomal subunit. Contacts protein L32.

In Escherichia fergusonii (strain ATCC 35469 / DSM 13698 / CCUG 18766 / IAM 14443 / JCM 21226 / LMG 7866 / NBRC 102419 / NCTC 12128 / CDC 0568-73), this protein is Large ribosomal subunit protein bL17.